Here is a 184-residue protein sequence, read N- to C-terminus: MGLEEKLPGGILLSTVEKVAGYVRKGSLWPATFGLACCAIEMMATAGPRFDISRFGMERFSATPRQADLMIVAGRVSQKMAPVLRQIYDQMAEPKWVLAMGVCASSGGMFNNYAVVQGVDHVVPVDIYLPGCPPRPEMLLHAILKLHDKIQQMPLGVNREEAIREAEQAAMALTPTIELKGLLR.

Cysteine 37, cysteine 38, cysteine 103, and cysteine 132 together coordinate [4Fe-4S] cluster.

This sequence belongs to the complex I 20 kDa subunit family. In terms of assembly, NDH-1 is composed of 14 different subunits. Subunits NuoB, C, D, E, F, and G constitute the peripheral sector of the complex. [4Fe-4S] cluster serves as cofactor.

Its subcellular location is the cell membrane. The enzyme catalyses a quinone + NADH + 5 H(+)(in) = a quinol + NAD(+) + 4 H(+)(out). Functionally, NDH-1 shuttles electrons from NADH, via FMN and iron-sulfur (Fe-S) centers, to quinones in the respiratory chain. The immediate electron acceptor for the enzyme in this species is believed to be a menaquinone. Couples the redox reaction to proton translocation (for every two electrons transferred, four hydrogen ions are translocated across the cytoplasmic membrane), and thus conserves the redox energy in a proton gradient. The polypeptide is NADH-quinone oxidoreductase subunit B (Mycolicibacterium gilvum (strain PYR-GCK) (Mycobacterium gilvum (strain PYR-GCK))).